A 224-amino-acid polypeptide reads, in one-letter code: 7-cyano-7-deazaguanine synthase (224 aa).

Residue 8-18 (LSGGMDSAAVI) coordinates ATP. Positions 186, 196, 199, and 202 each coordinate Zn(2+).

Belongs to the QueC family. It depends on Zn(2+) as a cofactor.

It carries out the reaction 7-carboxy-7-deazaguanine + NH4(+) + ATP = 7-cyano-7-deazaguanine + ADP + phosphate + H2O + H(+). It participates in purine metabolism; 7-cyano-7-deazaguanine biosynthesis. Functionally, catalyzes the ATP-dependent conversion of 7-carboxy-7-deazaguanine (CDG) to 7-cyano-7-deazaguanine (preQ(0)). This chain is 7-cyano-7-deazaguanine synthase, found in Xanthomonas oryzae pv. oryzae (strain MAFF 311018).